The sequence spans 649 residues: UvrABC system protein C (649 aa).

The region spanning 12–91 is the GIY-YIG domain; the sequence is SSPGVYLMKS…IKQHRPKYNI (80 aa). The UVR domain occupies 201 to 236; the sequence is NEVARLYRSKMNLASEQMRYEDAARYRDLLRAIEVT. Positions 603–649 are disordered; it reads RLHGGPLPNPPPPGEGAMGDGSIPSPRNGVMDDSIPSPSGRGWPKAG.

It belongs to the UvrC family. In terms of assembly, interacts with UvrB in an incision complex.

Its subcellular location is the cytoplasm. Functionally, the UvrABC repair system catalyzes the recognition and processing of DNA lesions. UvrC both incises the 5' and 3' sides of the lesion. The N-terminal half is responsible for the 3' incision and the C-terminal half is responsible for the 5' incision. This is UvrABC system protein C from Geobacter sp. (strain M21).